The primary structure comprises 87 residues: Type 3 secretion system needle filament protein (87 aa).

It belongs to the SctF family. The core secretion machinery of the T3SS is composed of approximately 20 different proteins, including cytoplasmic components, a base, an export apparatus and a needle. This subunit polymerizes and forms the helical needle filament. In Y.enterocolitica E40, the needles are composed of 139 (plus-minus 19) YscF/SctF subunits.

The protein resides in the secreted. Its subcellular location is the cell surface. With respect to regulation, the secretion and/or polymerization may be controlled by the type III secretion system regulator YopR. Component of the type III secretion system (T3SS), also called injectisome, which is used to inject bacterial effector proteins into eukaryotic host cells. YscF/SctF forms the external needle filament that protrudes from the bacterial surface. The needle is not sufficient by itself for the formation of a pore allowing translocation of the Yop effectors across the host cell membrane. This Yersinia enterocolitica protein is Type 3 secretion system needle filament protein.